Reading from the N-terminus, the 409-residue chain is Fructose-1,6-bisphosphatase, chloroplastic (409 aa).

Residues 1 to 49 (MAAATTTTSRPLLLSRQQAAASSLQCRLPRRPGSSLFAGQGQASTPNVR) constitute a chloroplast transit peptide. Mg(2+)-binding residues include glutamate 131, glutamate 160, aspartate 181, leucine 183, and aspartate 184. Residue 184–187 (DGSS) participates in substrate binding. Cysteine 223 and cysteine 228 form a disulfide bridge. Residues asparagine 287, tyrosine 319, tyrosine 337, tyrosine 339, and lysine 349 each contribute to the substrate site. Glutamate 355 contacts Mg(2+).

The protein belongs to the FBPase class 1 family. As to quaternary structure, homotetramer. The cofactor is Mg(2+). As to expression, in photosynthetically active tissues, and in the shoot and root apical meristems.

The protein localises to the plastid. It localises to the chloroplast. It carries out the reaction beta-D-fructose 1,6-bisphosphate + H2O = beta-D-fructose 6-phosphate + phosphate. It functions in the pathway carbohydrate biosynthesis; Calvin cycle. This Triticum aestivum (Wheat) protein is Fructose-1,6-bisphosphatase, chloroplastic (FBP).